A 144-amino-acid polypeptide reads, in one-letter code: Large ribosomal subunit protein eL27 (144 aa).

The region spanning 6–43 (IKPGRLVILLNGKYAGRKAVVIKTFDDATASKSRPYGH) is the KOW domain.

This sequence belongs to the eukaryotic ribosomal protein eL27 family.

The chain is Large ribosomal subunit protein eL27 (rpl27) from Dictyostelium discoideum (Social amoeba).